The chain runs to 114 residues: UPF0060 membrane protein GDI3492/Gdia_2889 (114 aa).

Transmembrane regions (helical) follow at residues 8 to 28, 35 to 55, 64 to 84, and 92 to 112; these read FAVYAAAALCEIGGCYAWWCW, AWVLLPGMASLALFGWLLTLV, FAAYGGIYIVGAIVWLRLVEG, and AAGVAICLAGAAIILSAGRGA.

It belongs to the UPF0060 family.

The protein resides in the cell inner membrane. The protein is UPF0060 membrane protein GDI3492/Gdia_2889 of Gluconacetobacter diazotrophicus (strain ATCC 49037 / DSM 5601 / CCUG 37298 / CIP 103539 / LMG 7603 / PAl5).